The chain runs to 1149 residues: Potassium channel subfamily U member 1 (1149 aa).

At 1 to 24 the chain is on the extracellular side; that stretch reads MFQTKLRNETWEDLPKMSCTTEIQ. The chain crosses the membrane as a helical span at residues 25–45; sequence AAFILSSFVTFFSGLIILLIF. The Cytoplasmic segment spans residues 46–101; the sequence is RLIWRSVKKWQIIKGTGIILELFTSGTIARSHVRSLHFQGQFRDHIEMLLSAQTFV. Residues 102-122 form a helical membrane-spanning segment; that stretch reads GQVLVILVFVLSIGSLIIYFI. Topologically, residues 123–138 are extracellular; the sequence is NSADPVGSCSSYEDKT. A helical transmembrane segment spans residues 139-159; that stretch reads IPIDLVFNAFFSFYFGLRFMA. The Cytoplasmic portion of the chain corresponds to 160–163; sequence ADDK. The helical transmembrane segment at 164-184 threads the bilayer; it reads IKFWLEMNSIVDIFTIPPTFI. The Extracellular segment spans residues 185 to 188; it reads SYYL. A helical; Voltage-sensor membrane pass occupies residues 189–209; the sequence is KSNWLGLRFLRALRLLELPQI. At 210–226 the chain is on the cytoplasmic side; that stretch reads LQILRAIKTSNSVKFSK. The chain crosses the membrane as a helical span at residues 227-247; the sequence is LLSIILSTWFTAAGFIHLVEN. Residues 248–259 are Extracellular-facing; sequence SGDPWLKGRNSQ. Residues 260 to 282 constitute an intramembrane region (pore-forming); the sequence is NISYFESIYLVMATTSTVGFGDV. Positions 276–279 match the Selectivity for potassium motif; it reads TVGF. The Extracellular portion of the chain corresponds to 283–291; it reads VAKTSLGRT. The chain crosses the membrane as a helical span at residues 292–312; it reads FIMFFTLGSLILFANYIPEMV. Topologically, residues 313 to 1149 are cytoplasmic; sequence ELFANKRKYT…EDPFAYSEPL (837 aa). 2 consecutive RCK N-terminal domains span residues 331–473 and 713–884; these read KKFI…DNII and RNHI…EGSL. 2 disordered regions span residues 828-854 and 1118-1149; these read QIDSSSDPSPSVSEETPGYTNGHNEKS and SQIPLGDNAKENERKTSDEVYDEDPFAYSEPL. A compositionally biased stretch (low complexity) spans 830-840; it reads DSSSDPSPSVS. Positions 1125-1135 are enriched in basic and acidic residues; it reads NAKENERKTSD.

This sequence belongs to the potassium channel family. Calcium-activated (TC 1.A.1.3) subfamily. KCa5.1/KCNU1 sub-subfamily. As to quaternary structure, homotetramer; which constitutes the activated potassium channel. Interacts with LRRC52; this interaction changes channel gating properties, such as shifting gating to more negative potentials at a given pH. As to expression, testis-specific.

The protein resides in the cell membrane. The protein localises to the cell projection. It is found in the cilium. Its subcellular location is the flagellum membrane. It carries out the reaction K(+)(in) = K(+)(out). Regulated by changes in cytosolic pH; activated by alkalization. Activated by intracellular Ca(2+). Despite strong sequence similarity, human KCNU1 channels are significantly more sensitive to activation by internal Ca(2+) and less pH-sensitive than mouse KCNU1. VU0546110 acts as a selective inhibitor. The auxiliary subunit LRRC52 shifts the activation of KCNU1 to more negative potentials at a given pH. In terms of biological role, testis-specific potassium channel activated by both intracellular pH and membrane voltage that mediates export of K(+). Represents the primary spermatozoan K(+) current. The channel underlies a pH-triggered membrane hyperpolarization during the process of sperm capacitation, as sperm encounter the alkaline environment near the ovum in the female reproductive tract, thereby playing an essential for male fertility. This chain is Potassium channel subfamily U member 1, found in Homo sapiens (Human).